A 47-amino-acid polypeptide reads, in one-letter code: IgA-inducing protein (47 aa).

Residues 1–24 (MKKRSVSGCNITILAVVFSHLSAG) form the signal peptide.

Expressed in Peyer patches, spleen, thymus, liver and mesenteric lymph node. Expressed at high levels by dendritic cells, and at lower levels by T-cells, monocytes and B-cells.

It localises to the secreted. Functionally, enhances IgA secretion from B-cells stimulated via CD40. The protein is IgA-inducing protein (IGIP) of Bos taurus (Bovine).